The chain runs to 377 residues: Gap junction gamma-1 protein (377 aa).

Residues Met1–Thr18 are Cytoplasmic-facing. A helical membrane pass occupies residues Phe19–Gly39. The Extracellular segment spans residues Gly40–Arg75. Residues Phe76–Met96 traverse the membrane as a helical segment. Over His97–Lys174 the chain is Cytoplasmic. Residues Asp129 to Gly163 form a disordered region. A compositionally biased stretch (acidic residues) spans Glu131–Lys151. Residues Val175 to Leu197 traverse the membrane as a helical segment. The Extracellular segment spans residues Tyr198 to Thr228. Residues Ile229–Leu249 traverse the membrane as a helical segment. The Cytoplasmic segment spans residues Phe250–Leu377. 2 disordered regions span residues Lys266–Leu286 and Ala341–Leu377. A compositionally biased stretch (polar residues) spans Ser344–Asn362.

It belongs to the connexin family. Gamma-type subfamily. A connexon is composed of a hexamer of connexins.

Its subcellular location is the cell membrane. It is found in the cell junction. It localises to the gap junction. Functionally, one gap junction consists of a cluster of closely packed pairs of transmembrane channels, the connexons, through which materials of low MW diffuse from one cell to a neighboring cell. In Xenopus laevis (African clawed frog), this protein is Gap junction gamma-1 protein (gjc1).